A 164-amino-acid chain; its full sequence is Endoribonuclease YbeY (164 aa).

His-120, His-124, and His-130 together coordinate Zn(2+).

The protein belongs to the endoribonuclease YbeY family. Zn(2+) is required as a cofactor.

Its subcellular location is the cytoplasm. Single strand-specific metallo-endoribonuclease involved in late-stage 70S ribosome quality control and in maturation of the 3' terminus of the 16S rRNA. This Acidothermus cellulolyticus (strain ATCC 43068 / DSM 8971 / 11B) protein is Endoribonuclease YbeY.